The sequence spans 2455 residues: Ectopic P granules protein 5 homolog (2455 aa).

The segment at 1–42 is disordered; the sequence is MATLEKPKKEKSKKSRNRVPIEKEEEEPAELSTSEEQRPAEN. Ser-44 is subject to Phosphoserine. A disordered region spans residues 77-105; sequence VTSQEPEGTQEPTETEAQPSAPSAPPSTT. The span at 80–97 shows a compositional bias: low complexity; the sequence is QEPEGTQEPTETEAQPSA. At Ser-467 the chain carries Phosphoserine.

The protein belongs to the EPG5 family.

The protein resides in the cytoplasm. The protein localises to the perinuclear region. Its subcellular location is the lysosome. Its function is as follows. Involved in autophagy. Plays a role in late steps of autophagy. The chain is Ectopic P granules protein 5 homolog from Drosophila melanogaster (Fruit fly).